A 239-amino-acid polypeptide reads, in one-letter code: Lactate utilization protein A 2 (239 aa).

Belongs to the LutA/YkgE family.

Functionally, is involved in L-lactate degradation and allows cells to grow with lactate as the sole carbon source. The protein is Lactate utilization protein A 2 of Bacillus mycoides (strain KBAB4) (Bacillus weihenstephanensis).